Consider the following 657-residue polypeptide: Archaeal Lon protease (657 aa).

Topologically, residues 1–123 (MEENIESVEE…KAEREKRDRS (123 aa)) are cytoplasmic. 57 to 64 (GEPGTGKS) is a binding site for ATP. The helical transmembrane segment at 124 to 144 (RSIMFVIFSVVLLGIIAAIVL) threads the bilayer. Position 145 (Arg-145) is a topological domain, extracellular. A helical transmembrane segment spans residues 146 to 166 (SITLIFFAIMAAAFLYMAMAF). Over 167-657 (NPVIRNERAM…ATTRAGNNAA (491 aa)) the chain is Cytoplasmic. The 186-residue stretch at 433-618 (GSVVGMVNGL…EDVLRVALVN (186 aa)) folds into the Lon proteolytic domain. Active-site residues include Ser-525 and Lys-568.

The protein belongs to the peptidase S16 family. Archaeal LonB subfamily. In terms of assembly, homohexamer. Organized in a ring with a central cavity.

It is found in the cell membrane. ATP-dependent serine protease that mediates the selective degradation of mutant and abnormal proteins as well as certain short-lived regulatory proteins. Degrades polypeptides processively. In Thermoplasma acidophilum (strain ATCC 25905 / DSM 1728 / JCM 9062 / NBRC 15155 / AMRC-C165), this protein is Archaeal Lon protease.